Consider the following 210-residue polypeptide: Cytochrome c biogenesis ATP-binding export protein CcmA (210 aa).

The ABC transporter domain occupies 4–208; that stretch reads VPTLSFSKLG…GAIPAQLLEL (205 aa). Position 39 to 46 (39 to 46) interacts with ATP; the sequence is GANGVGKT.

It belongs to the ABC transporter superfamily. CcmA exporter (TC 3.A.1.107) family. In terms of assembly, the complex is composed of two ATP-binding proteins (CcmA) and two transmembrane proteins (CcmB).

Its subcellular location is the cell inner membrane. It carries out the reaction heme b(in) + ATP + H2O = heme b(out) + ADP + phosphate + H(+). Its function is as follows. Part of the ABC transporter complex CcmAB involved in the biogenesis of c-type cytochromes; once thought to export heme, this seems not to be the case, but its exact role is uncertain. Responsible for energy coupling to the transport system. This is Cytochrome c biogenesis ATP-binding export protein CcmA from Albidiferax ferrireducens (strain ATCC BAA-621 / DSM 15236 / T118) (Rhodoferax ferrireducens).